A 475-amino-acid polypeptide reads, in one-letter code: Chromosomal replication initiator protein DnaA (475 aa).

A domain I, interacts with DnaA modulators region spans residues 1–73 (MTNSEQERWS…LSCWQAEMPE (73 aa)). A domain II region spans residues 73 to 131 (EVHRIDLSVRTAMRCATPAKEAPVAVEARRAERGDAKPADTRAPVMTPVAASHDALGGS). The tract at residues 132–354 (PLDPRLTFAS…GAINRLLAHS (223 aa)) is domain III, AAA+ region. Residues Gly-179, Gly-181, Lys-182, and Thr-183 each contribute to the ATP site. The segment at 355–475 (KLNNQPVTLD…VEALKRQLQD (121 aa)) is domain IV, binds dsDNA.

Belongs to the DnaA family. In terms of assembly, oligomerizes as a right-handed, spiral filament on DNA at oriC.

It localises to the cytoplasm. Its function is as follows. Plays an essential role in the initiation and regulation of chromosomal replication. ATP-DnaA binds to the origin of replication (oriC) to initiate formation of the DNA replication initiation complex once per cell cycle. Binds the DnaA box (a 9 base pair repeat at the origin) and separates the double-stranded (ds)DNA. Forms a right-handed helical filament on oriC DNA; dsDNA binds to the exterior of the filament while single-stranded (ss)DNA is stabiized in the filament's interior. The ATP-DnaA-oriC complex binds and stabilizes one strand of the AT-rich DNA unwinding element (DUE), permitting loading of DNA polymerase. After initiation quickly degrades to an ADP-DnaA complex that is not apt for DNA replication. Binds acidic phospholipids. This is Chromosomal replication initiator protein DnaA from Bradyrhizobium sp. (strain BTAi1 / ATCC BAA-1182).